Consider the following 248-residue polypeptide: MTILFLTMVISYFSCMKAAPMKEANVRGQGSLAYPGMRTHGTLESVNGPKVGSRGLTSSLADTVEHVIEELLDEDQKVRPSEENNKDADMYTSRVMLSSQVPLEPPLLFLLEEYKNYLDAANMSMRVRRHSDPARRGELSVCDSISEWVTAADKKTAVDMSGGTVTVLEKVPVSKGQLKQYFYETKCNPMGYTKEGCRGIDKRHWDSQCRTTQSYVRALTMDSKKRIGWRFIRIDTSCVCTLTIKRGR.

Residues M1–A18 form the signal peptide. Residues A19–R129 constitute a propeptide that is removed on maturation. A glycan (N-linked (GlcNAc...) asparagine) is linked at N122. 3 cysteine pairs are disulfide-bonded: C142–C209, C187–C238, and C197–C240.

This sequence belongs to the NGF-beta family. In terms of assembly, monomers and homodimers. Binds to NTRK2/TRKB. Can form heterodimers with other neurotrophin family members, such as NTF3 and NTF4 (in vitro), but the physiological relevance of this is not clear. BDNF precursor form: interacts with the heterodimer formed by NGFR and SORCS2. Mature BDNF has much lower affinity for the heterodimer formed by NGFR and SORCS2. N-glycosylated and glycosulfated, contrary to mature BDNF. Post-translationally, mature BDNF is produced by proteolytic removal of the propeptide, catalyzed by a FURIN family member. In addition, the precursor form is proteolytically cleaved within the propeptide, but this is not an obligatory intermediate for the production of mature BDNF. Can be converted into mature BDNF by plasmin (PLG).

Its subcellular location is the secreted. In terms of biological role, important signaling molecule that activates signaling cascades downstream of NTRK2. During development, promotes the survival and differentiation of selected neuronal populations of the peripheral and central nervous systems. Participates in axonal growth, pathfinding and in the modulation of dendritic growth and morphology. Major regulator of synaptic transmission and plasticity at adult synapses in many regions of the CNS. The versatility of BDNF is emphasized by its contribution to a range of adaptive neuronal responses including long-term potentiation (LTP), long-term depression (LTD), certain forms of short-term synaptic plasticity, as well as homeostatic regulation of intrinsic neuronal excitability. Its function is as follows. Important signaling molecule that activates signaling cascades downstream of NTRK2. Activates signaling cascades via the heterodimeric receptor formed by NGFR and SORCS2. Signaling via NGFR and SORCS2 plays a role in synaptic plasticity and long-term depression (LTD). Binding to NGFR and SORCS2 promotes neuronal apoptosis. Promotes neuronal growth cone collapse. The polypeptide is Neurotrophic factor BDNF precursor form (BDNF) (Lipotes vexillifer (Yangtze river dolphin)).